Here is a 776-residue protein sequence, read N- to C-terminus: DExH-box ATP-dependent RNA helicase DExH18, mitochondrial (776 aa).

A mitochondrion-targeting transit peptide spans 1 to 84; it reads MARGVAGVLR…RSFSSTVDNN (84 aa). A disordered region spans residues 80-101; it reads TVDNNGENDDIEESVGSESDDY. Positions 85–101 are enriched in acidic residues; the sequence is GENDDIEESVGSESDDY. Residues 268-426 enclose the Helicase ATP-binding domain; sequence FARAMKRKIV…RFKPLVVEAK (159 aa). 281 to 288 is a binding site for ATP; the sequence is GPTNSGKT. A DEIH box; degenerate motif is present at residues 361 to 364; that stretch reads DEIQ. The Helicase C-terminal domain maps to 427-595; sequence TLLGELKNVK…LFAAQVPDMA (169 aa).

This sequence belongs to the DExH box helicase family. In terms of assembly, homodimer; in free form. Component of the mitochondrial degradosome (mtEXO) complex which is a heteropentamer containing 2 copies of SUPV3L1 and 3 copies of PNPT1. The cofactor is Mg(2+). Mn(2+) serves as cofactor.

The protein localises to the nucleus. The protein resides in the mitochondrion matrix. It is found in the mitochondrion nucleoid. The enzyme catalyses ATP + H2O = ADP + phosphate + H(+). In terms of biological role, major helicase player in mitochondrial RNA metabolism. Component of the mitochondrial degradosome (mtEXO) complex, that degrades 3' overhang double-stranded RNA with a 3'-to-5' directionality in an ATP-dependent manner. ATPase and ATP-dependent multisubstrate helicase, able to unwind double-stranded (ds) DNA and RNA, and RNA/DNA heteroduplexes in the 5'-to-3' direction. Plays a role in the RNA surveillance system in mitochondria; regulates the stability of mature mRNAs, the removal of aberrantly formed mRNAs and the rapid degradation of non coding processing intermediates. The chain is DExH-box ATP-dependent RNA helicase DExH18, mitochondrial from Arabidopsis thaliana (Mouse-ear cress).